The chain runs to 104 residues: Phosphoribosyl-ATP pyrophosphatase (104 aa).

It belongs to the PRA-PH family.

It is found in the cytoplasm. It carries out the reaction 1-(5-phospho-beta-D-ribosyl)-ATP + H2O = 1-(5-phospho-beta-D-ribosyl)-5'-AMP + diphosphate + H(+). It participates in amino-acid biosynthesis; L-histidine biosynthesis; L-histidine from 5-phospho-alpha-D-ribose 1-diphosphate: step 2/9. The protein is Phosphoribosyl-ATP pyrophosphatase of Nitrosococcus oceani (strain ATCC 19707 / BCRC 17464 / JCM 30415 / NCIMB 11848 / C-107).